We begin with the raw amino-acid sequence, 254 residues long: Thiazole synthase (254 aa).

The active-site Schiff-base intermediate with DXP is Lys96. 1-deoxy-D-xylulose 5-phosphate is bound by residues Gly157, 183–184, and 205–206; these read AG and NT.

This sequence belongs to the ThiG family. As to quaternary structure, homotetramer. Forms heterodimers with either ThiH or ThiS.

The protein resides in the cytoplasm. The catalysed reaction is [ThiS sulfur-carrier protein]-C-terminal-Gly-aminoethanethioate + 2-iminoacetate + 1-deoxy-D-xylulose 5-phosphate = [ThiS sulfur-carrier protein]-C-terminal Gly-Gly + 2-[(2R,5Z)-2-carboxy-4-methylthiazol-5(2H)-ylidene]ethyl phosphate + 2 H2O + H(+). The protein operates within cofactor biosynthesis; thiamine diphosphate biosynthesis. Functionally, catalyzes the rearrangement of 1-deoxy-D-xylulose 5-phosphate (DXP) to produce the thiazole phosphate moiety of thiamine. Sulfur is provided by the thiocarboxylate moiety of the carrier protein ThiS. In vitro, sulfur can be provided by H(2)S. The sequence is that of Thiazole synthase from Clostridium perfringens (strain SM101 / Type A).